Here is an 89-residue protein sequence, read N- to C-terminus: Small ribosomal subunit protein bS20 (89 aa).

The disordered stretch occupies residues 1 to 20 (MANHKSAEKRARQTIKRTER).

This sequence belongs to the bacterial ribosomal protein bS20 family.

In terms of biological role, binds directly to 16S ribosomal RNA. In Campylobacter curvus (strain 525.92), this protein is Small ribosomal subunit protein bS20.